The primary structure comprises 442 residues: Trigger factor (442 aa).

In terms of domain architecture, PPIase FKBP-type spans 162–247 (GDQVTIDAIG…IKAVHTSEPT (86 aa)).

This sequence belongs to the FKBP-type PPIase family. Tig subfamily.

It is found in the cytoplasm. The enzyme catalyses [protein]-peptidylproline (omega=180) = [protein]-peptidylproline (omega=0). Functionally, involved in protein export. Acts as a chaperone by maintaining the newly synthesized protein in an open conformation. Functions as a peptidyl-prolyl cis-trans isomerase. The polypeptide is Trigger factor (Rickettsia canadensis (strain McKiel)).